The sequence spans 316 residues: tRNA dimethylallyltransferase (316 aa).

Residue 17-24 participates in ATP binding; that stretch reads GPTASGKT. 19-24 is a substrate binding site; the sequence is TASGKT. Interaction with substrate tRNA regions lie at residues 42–45, 166–170, and 247–252; these read DSAL, QRLSR, and RCVGYR.

This sequence belongs to the IPP transferase family. Monomer. Requires Mg(2+) as cofactor.

It catalyses the reaction adenosine(37) in tRNA + dimethylallyl diphosphate = N(6)-dimethylallyladenosine(37) in tRNA + diphosphate. In terms of biological role, catalyzes the transfer of a dimethylallyl group onto the adenine at position 37 in tRNAs that read codons beginning with uridine, leading to the formation of N6-(dimethylallyl)adenosine (i(6)A). This is tRNA dimethylallyltransferase from Salmonella paratyphi C (strain RKS4594).